The primary structure comprises 257 residues: LexA repressor (257 aa).

The H-T-H motif DNA-binding region spans 64–84 (FREIGEAAGLKSPSSVKHQLQ). Active-site for autocatalytic cleavage activity residues include Ser181 and Lys218.

The protein belongs to the peptidase S24 family. In terms of assembly, homodimer.

The catalysed reaction is Hydrolysis of Ala-|-Gly bond in repressor LexA.. Represses a number of genes involved in the response to DNA damage (SOS response), including recA and lexA. In the presence of single-stranded DNA, RecA interacts with LexA causing an autocatalytic cleavage which disrupts the DNA-binding part of LexA, leading to derepression of the SOS regulon and eventually DNA repair. The protein is LexA repressor of Bifidobacterium adolescentis (strain ATCC 15703 / DSM 20083 / NCTC 11814 / E194a).